We begin with the raw amino-acid sequence, 225 residues long: Lipid A 4'-phosphatase (225 aa).

Helical transmembrane passes span 29–49 (SAFT…YILL), 51–71 (NFHW…ITFA), 110–130 (FGFP…LICL), 136–156 (LSIF…YLGL), 160–180 (GDLV…YFIA), and 203–223 (TEVM…YSIV).

Belongs to the lipid A LpxF 4'-phosphatase family.

The protein localises to the cell inner membrane. It participates in bacterial outer membrane biogenesis; LPS lipid A biosynthesis. Functionally, probably removes the 4'-phosphate group from lipid A. Removal of this phosphate group confers resistance to cationic antimicrobial peptides (CAMPs), inflammation-associated peptides produced by the human host. This LPS modification helps maintain the stability of this commensal bacterium in gut microbiota. This is Lipid A 4'-phosphatase from Bacteroides thetaiotaomicron (strain ATCC 29148 / DSM 2079 / JCM 5827 / CCUG 10774 / NCTC 10582 / VPI-5482 / E50).